The following is a 459-amino-acid chain: ATP-dependent 6-phosphofructokinase (459 aa).

ATP contacts are provided by residues glycine 89, 154-155 (RG), and 179-182 (GDGG). Aspartate 180 provides a ligand contact to Mg(2+). Substrate contacts are provided by residues 208 to 210 (TID), 253 to 255 (MGR), glutamate 309, and 368 to 371 (YAIR). Aspartate 210 (proton acceptor) is an active-site residue.

Belongs to the phosphofructokinase type A (PFKA) family. PPi-dependent PFK group II subfamily. Atypical ATP-dependent clade 'X' sub-subfamily. Homodimer. Mg(2+) serves as cofactor.

The protein resides in the cytoplasm. The catalysed reaction is beta-D-fructose 6-phosphate + ATP = beta-D-fructose 1,6-bisphosphate + ADP + H(+). It functions in the pathway carbohydrate degradation; glycolysis; D-glyceraldehyde 3-phosphate and glycerone phosphate from D-glucose: step 3/4. Its activity is regulated as follows. AMP causes 20-40% inhibition and diphosphate causes 20-50% inhibition. ADP, citrate, PEP and FBP have no effect. In terms of biological role, catalyzes the phosphorylation of D-fructose 6-phosphate to fructose 1,6-bisphosphate by ATP, the first committing step of glycolysis. In Amycolatopsis methanolica, this protein is ATP-dependent 6-phosphofructokinase.